Consider the following 184-residue polypeptide: Ras-related protein Rap1 (184 aa).

GTP is bound at residue 10 to 17 (GSGGVGKS). An Effector region motif is present at residues 32 to 40 (YDPTIEDSY). GTP-binding positions include 57-61 (DTAGT) and 116-119 (NKCD). Cys181 carries the post-translational modification Cysteine methyl ester. Cys181 is lipidated: S-geranylgeranyl cysteine. A propeptide spans 182–184 (VLL) (removed in mature form).

It belongs to the small GTPase superfamily. Ras family.

The protein resides in the cell membrane. The catalysed reaction is GTP + H2O = GDP + phosphate + H(+). With respect to regulation, alternates between an inactive form bound to GDP and an active form bound to GTP. Activated by a guanine nucleotide-exchange factor (GEF) and inactivated by a GTPase-activating protein (GAP). Ras proteins bind GDP/GTP and possess intrinsic GTPase activity. Plays a role in photoreceptor cell determination. This is Ras-related protein Rap1 from Drosophila melanogaster (Fruit fly).